A 558-amino-acid chain; its full sequence is Ribonuclease J (558 aa).

Residues His-81, His-83, Asp-85, His-86, His-148, and Asp-170 each coordinate Zn(2+). Residue 371–375 (HVSGH) coordinates substrate. His-397 contributes to the Zn(2+) binding site.

The protein belongs to the metallo-beta-lactamase superfamily. RNA-metabolizing metallo-beta-lactamase-like family. Bacterial RNase J subfamily. Homodimer. It depends on Zn(2+) as a cofactor.

The protein resides in the cytoplasm. In terms of biological role, an RNase that has endonuclease and 5'-3' exonuclease activity. The 5'-exonuclease activity acts on 5'-monophosphate but not 5'-triphosphate ends. Endonuclease activity can cleave within 4 nucleotides of the 5'-end of a triphosphorylated RNA. Plays the major role in pre-23S rRNA maturation, and a minor role in processing of pre-5S and pre-16S rRNA. The sequence is that of Ribonuclease J from Mycolicibacterium smegmatis (strain ATCC 700084 / mc(2)155) (Mycobacterium smegmatis).